A 117-amino-acid chain; its full sequence is Putative cysteine proteinase inhibitor 7 (117 aa).

The signal sequence occupies residues 1 to 24 (MTMRTSSLLLAAVAVVAIVAGATA). One can recognise a Cystatin domain in the interval 28-84 (GSWEPVDINDPHVQELGRWAVAEEDRGVAAGGLTFERVTDGEKQVVAGVNYRLTLEA). The Secondary area of contact motif lies at 71–75 (QVVAG).

It belongs to the cystatin family. Phytocystatin subfamily.

It is found in the secreted. Functionally, specific inhibitor of cysteine proteinases. Probably involved in the regulation of endogenous processes and in defense against pests and pathogens. The sequence is that of Putative cysteine proteinase inhibitor 7 from Oryza sativa subsp. japonica (Rice).